A 379-amino-acid polypeptide reads, in one-letter code: Leukocyte elastase inhibitor A (379 aa).

Phosphoserine is present on S300. The tract at residues 351–379 (EFTVDHPFIFFIRHNPTSNVLFLGRVCSP) is CARD-binding motif (CBM).

This sequence belongs to the serpin family. Ov-serpin subfamily. Monomer. Interacts (via C-terminus) with CASP1 and CASP4 (via CARD domain); these interactions regulate the activity of inflammatory caspases. In terms of tissue distribution, ubiquitous with higher expression in pancreas, spleen and bone marrow.

Its subcellular location is the secreted. The protein resides in the cytoplasm. The protein localises to the cytolytic granule. It is found in the early endosome. Functionally, neutrophil serine protease inhibitor that plays an essential role in the regulation of the innate immune response, inflammation and cellular homeostasis. Acts primarily to protect the cell from proteases released in the cytoplasm during stress or infection. These proteases are important in killing microbes but when released from granules, these potent enzymes also destroy host proteins and contribute to mortality. Regulates the activity of the neutrophil proteases elastase, cathepsin G, proteinase-3, chymase, chymotrypsin, and kallikrein-3. Also acts as a potent intracellular inhibitor of granzyme H. During inflammation, limits the activity of inflammatory caspases CASP1 and CASP4 by suppressing their caspase-recruitment domain (CARD) oligomerization and enzymatic activation. In addition, promotes the proliferation of beta-cells when secreted. This Mus musculus (Mouse) protein is Leukocyte elastase inhibitor A (Serpinb1a).